The chain runs to 104 residues: Thioredoxin (104 aa).

The Thioredoxin domain maps to 2–104 (KQVSDASFEE…KLFEWVEASV (103 aa)). Cys-29 and Cys-32 form a disulfide bridge.

It belongs to the thioredoxin family.

In terms of biological role, participates in various redox reactions through the reversible oxidation of its active center dithiol to a disulfide and catalyzes dithiol-disulfide exchange reactions. The polypeptide is Thioredoxin (trxA) (Rhodospirillum rubrum).